Consider the following 678-residue polypeptide: Glutamate--cysteine ligase (678 aa).

Belongs to the glutamate--cysteine ligase type 3 family.

The enzyme catalyses L-cysteine + L-glutamate + ATP = gamma-L-glutamyl-L-cysteine + ADP + phosphate + H(+). It functions in the pathway sulfur metabolism; glutathione biosynthesis; glutathione from L-cysteine and L-glutamate: step 1/2. With respect to regulation, feedback inhibition by glutathione. Functionally, catalyzes the ATP-dependent condensation of cysteine and glutamate to form the dipeptide gamma-glutamylcysteine (gamma-GC), the first and rate-limiting step in the production of glutathione (GSH). The chain is Glutamate--cysteine ligase (GSH1) from Saccharomyces cerevisiae (strain ATCC 204508 / S288c) (Baker's yeast).